The chain runs to 535 residues: Peptide chain release factor 3 (535 aa).

One can recognise a tr-type G domain in the interval 8 to 277 (KRRRTFAIIS…TLVDLAPPPG (270 aa)). GTP is bound by residues 17–24 (SHPDAGKT), 85–89 (DTPGH), and 139–142 (NKLD).

Belongs to the TRAFAC class translation factor GTPase superfamily. Classic translation factor GTPase family. PrfC subfamily.

The protein localises to the cytoplasm. Functionally, increases the formation of ribosomal termination complexes and stimulates activities of RF-1 and RF-2. It binds guanine nucleotides and has strong preference for UGA stop codons. It may interact directly with the ribosome. The stimulation of RF-1 and RF-2 is significantly reduced by GTP and GDP, but not by GMP. The protein is Peptide chain release factor 3 of Nitrosomonas eutropha (strain DSM 101675 / C91 / Nm57).